Here is a 1004-residue protein sequence, read N- to C-terminus: Polyhomeotic-like protein 1 (1004 aa).

The segment covering 1–22 (METESEQNSNSTNGSSSSGGSS) has biased composition (low complexity). 6 disordered regions span residues 1–24 (METESEQNSNSTNGSSSSGGSSRP), 212–241 (NQQASAQGPQMQGSTQKAIPPGASPVSSLS), 261–355 (SLNL…NLTR), 432–512 (QQQQ…QLGA), 556–589 (RGMPGTVQSGQAHLASSPPSSQAPGALQECPPTL), and 636–672 (TLAVKRKADSEEERDDVSTLGSMLPAKASPVAESPKV). Residues 212–228 (NQQASAQGPQMQGSTQK) show a composition bias toward polar residues. Over residues 279-303 (MGPGGGGQAHGGLGQLPSSGMGGGS) the composition is skewed to gly residues. Composition is skewed to polar residues over residues 319–329 (QTVTVSQGSQT) and 344–355 (SGQQNVGMNLTR). A compositionally biased stretch (low complexity) spans 432-447 (QQQQQQQQPQATTLTA). The segment covering 448-458 (PQPPQVPPTQQ) has biased composition (pro residues). Positions 459–482 (VPPSQSQQQAQTLVVQPMLQSSPL) are enriched in low complexity. Residues 483–495 (SLPPDAAPKPPIP) show a composition bias toward pro residues. Residues 566–583 (QAHLASSPPSSQAPGALQ) show a composition bias toward low complexity. The residue at position 645 (serine 645) is a Phosphoserine. Residue lysine 763 forms a Glycyl lysine isopeptide (Lys-Gly) (interchain with G-Cter in SUMO2) linkage. The segment at 791 to 825 (LDKKANLLKCEYCGKYAPAEQFRGSKRFCSMTCAK) adopts an FCS-type zinc-finger fold. The Zn(2+) site is built by cysteine 800, cysteine 803, cysteine 819, and cysteine 823. A disordered region spans residues 848-928 (ANYARVRRRG…APPTPELHGI (81 aa)). Serine 898 is modified (phosphoserine). Position 922 is a phosphothreonine (threonine 922). An SAM domain is found at 940–1004 (WSVEEVYEFI…CAKINVLKET (65 aa)).

As to quaternary structure, homodimer. Component of a PRC1-like complex. Interacts with RNF2 and CBX7. Interacts with PHC2, PHC2 and BMI1.

It localises to the nucleus. Component of a Polycomb group (PcG) multiprotein PRC1-like complex, a complex class required to maintain the transcriptionally repressive state of many genes, including Hox genes, throughout development. PcG PRC1 complex acts via chromatin remodeling and modification of histones; it mediates monoubiquitination of histone H2A 'Lys-119', rendering chromatin heritably changed in its expressibility. Required for proper control of cellular levels of GMNN expression. The polypeptide is Polyhomeotic-like protein 1 (PHC1) (Homo sapiens (Human)).